A 399-amino-acid polypeptide reads, in one-letter code: Chaperone protein DnaJ 1 (399 aa).

Positions 10–75 (DYYKVLGVPK…KKRKEYDEAR (66 aa)) constitute a J domain. Residues 166-244 (GATVPLRMSS…CKGSGRAKSS (79 aa)) form a CR-type zinc finger. Residues Cys179, Cys182, Cys195, Cys198, Cys218, Cys221, Cys232, and Cys235 each coordinate Zn(2+). CXXCXGXG motif repeat units follow at residues 179 to 186 (CKACSGTG), 195 to 202 (CPTCVGTG), 218 to 225 (CPDCKGRG), and 232 to 239 (CEVCKGSG).

Belongs to the DnaJ family. Homodimer. Requires Zn(2+) as cofactor.

It is found in the cytoplasm. Functionally, participates actively in the response to hyperosmotic and heat shock by preventing the aggregation of stress-denatured proteins and by disaggregating proteins, also in an autonomous, DnaK-independent fashion. Unfolded proteins bind initially to DnaJ; upon interaction with the DnaJ-bound protein, DnaK hydrolyzes its bound ATP, resulting in the formation of a stable complex. GrpE releases ADP from DnaK; ATP binding to DnaK triggers the release of the substrate protein, thus completing the reaction cycle. Several rounds of ATP-dependent interactions between DnaJ, DnaK and GrpE are required for fully efficient folding. Also involved, together with DnaK and GrpE, in the DNA replication of plasmids through activation of initiation proteins. In Streptomyces coelicolor (strain ATCC BAA-471 / A3(2) / M145), this protein is Chaperone protein DnaJ 1.